The chain runs to 367 residues: UDP-N-acetylglucosamine--N-acetylmuramyl-(pentapeptide) pyrophosphoryl-undecaprenol N-acetylglucosamine transferase (367 aa).

UDP-N-acetyl-alpha-D-glucosamine is bound by residues 13 to 15, arginine 168, serine 196, isoleucine 252, and glutamine 297; that span reads TGG.

The protein belongs to the glycosyltransferase 28 family. MurG subfamily.

The protein localises to the cell inner membrane. It catalyses the reaction di-trans,octa-cis-undecaprenyl diphospho-N-acetyl-alpha-D-muramoyl-L-alanyl-D-glutamyl-meso-2,6-diaminopimeloyl-D-alanyl-D-alanine + UDP-N-acetyl-alpha-D-glucosamine = di-trans,octa-cis-undecaprenyl diphospho-[N-acetyl-alpha-D-glucosaminyl-(1-&gt;4)]-N-acetyl-alpha-D-muramoyl-L-alanyl-D-glutamyl-meso-2,6-diaminopimeloyl-D-alanyl-D-alanine + UDP + H(+). It participates in cell wall biogenesis; peptidoglycan biosynthesis. Its function is as follows. Cell wall formation. Catalyzes the transfer of a GlcNAc subunit on undecaprenyl-pyrophosphoryl-MurNAc-pentapeptide (lipid intermediate I) to form undecaprenyl-pyrophosphoryl-MurNAc-(pentapeptide)GlcNAc (lipid intermediate II). This is UDP-N-acetylglucosamine--N-acetylmuramyl-(pentapeptide) pyrophosphoryl-undecaprenol N-acetylglucosamine transferase from Methylibium petroleiphilum (strain ATCC BAA-1232 / LMG 22953 / PM1).